The primary structure comprises 335 residues: Phosphatidylglycerol--prolipoprotein diacylglyceryl transferase (335 aa).

The next 3 helical transmembrane spans lie at 31 to 51, 67 to 87, and 100 to 120; these read IYWY…TYSL, YIFL…LAIG, and LAIQ…FPLI. Arg-163 lines the a 1,2-diacyl-sn-glycero-3-phospho-(1'-sn-glycerol) pocket. Helical transmembrane passes span 213 to 233, 235 to 255, and 277 to 297; these read PLFL…YFGL, YIKQ…YGVI, and SLLL…APIL.

It belongs to the Lgt family.

The protein localises to the cell membrane. The catalysed reaction is L-cysteinyl-[prolipoprotein] + a 1,2-diacyl-sn-glycero-3-phospho-(1'-sn-glycerol) = an S-1,2-diacyl-sn-glyceryl-L-cysteinyl-[prolipoprotein] + sn-glycerol 1-phosphate + H(+). Its pathway is protein modification; lipoprotein biosynthesis (diacylglyceryl transfer). Catalyzes the transfer of the diacylglyceryl group from phosphatidylglycerol to the sulfhydryl group of the N-terminal cysteine of a prolipoprotein, the first step in the formation of mature lipoproteins. The chain is Phosphatidylglycerol--prolipoprotein diacylglyceryl transferase from Ureaplasma urealyticum serovar 10 (strain ATCC 33699 / Western).